The chain runs to 300 residues: 4-hydroxy-tetrahydrodipicolinate synthase (300 aa).

Position 45 (T45) interacts with pyruvate. Residue Y140 is the Proton donor/acceptor of the active site. The Schiff-base intermediate with substrate role is filled by K169. V210 lines the pyruvate pocket.

Belongs to the DapA family. As to quaternary structure, homotetramer; dimer of dimers.

Its subcellular location is the cytoplasm. The catalysed reaction is L-aspartate 4-semialdehyde + pyruvate = (2S,4S)-4-hydroxy-2,3,4,5-tetrahydrodipicolinate + H2O + H(+). It functions in the pathway amino-acid biosynthesis; L-lysine biosynthesis via DAP pathway; (S)-tetrahydrodipicolinate from L-aspartate: step 3/4. Functionally, catalyzes the condensation of (S)-aspartate-beta-semialdehyde [(S)-ASA] and pyruvate to 4-hydroxy-tetrahydrodipicolinate (HTPA). The protein is 4-hydroxy-tetrahydrodipicolinate synthase of Helicobacter acinonychis (strain Sheeba).